The primary structure comprises 435 residues: MQVTVETLEGLERRLNITVPAANIEDAVTAELRNIAKNRRFDGFRKGKVPLKMVAKMYGKAVRQDVLGEVMQRHFIEAIVKEKINPAGAPTFAPVENNEGADLVFTATFEVYPEVELKGLDSITVEKPTTEVNDSDVEEMIETLRKQQATWAEVEEAAEAGKRVSIDFVGSIDGEEFEGGKAENFPLEMGAGRMIPGFEDGIEGKTKGMEFEIDVNFPEDYHAENLKGKAAKFAIKVNKVEARELPELNDEFVSKFGVAEGGVEALKAEVRKNMERELKQAVKNRIKEQAIDGLVEQNEIDVPAALIDQEIQVLRQQAAQRFGGNPEAAAQLPRELFEEQAKRRVVVGLLLGEVIKSEELKADDEKVKALIEEMATAYEDPSEVIAYYEQNEQMMNNMRNVALEEQAIDAIIAKAQVSEKEVSFNELLNQQQPAA.

The PPIase FKBP-type domain maps to 161-246; that stretch reads GKRVSIDFVG…VNKVEARELP (86 aa).

It belongs to the FKBP-type PPIase family. Tig subfamily.

It localises to the cytoplasm. It catalyses the reaction [protein]-peptidylproline (omega=180) = [protein]-peptidylproline (omega=0). Its function is as follows. Involved in protein export. Acts as a chaperone by maintaining the newly synthesized protein in an open conformation. Functions as a peptidyl-prolyl cis-trans isomerase. The sequence is that of Trigger factor from Vibrio campbellii (strain ATCC BAA-1116).